A 396-amino-acid polypeptide reads, in one-letter code: L-lactate dehydrogenase (396 aa).

Residues Met1 to Gly380 enclose the FMN hydroxy acid dehydrogenase domain. Substrate is bound at residue Tyr24. FMN contacts are provided by Ser106 and Gln127. Tyr129 lines the substrate pocket. Thr155 provides a ligand contact to FMN. Arg164 lines the substrate pocket. Lys251 contacts FMN. Residue His275 is the Proton acceptor of the active site. Substrate is bound at residue Arg278. FMN is bound at residue Asp306 to Arg330.

The protein belongs to the FMN-dependent alpha-hydroxy acid dehydrogenase family. FMN serves as cofactor.

The protein resides in the cell inner membrane. It catalyses the reaction (S)-lactate + A = pyruvate + AH2. Its function is as follows. Catalyzes the conversion of L-lactate to pyruvate. Is coupled to the respiratory chain. The polypeptide is L-lactate dehydrogenase (Salmonella schwarzengrund (strain CVM19633)).